The chain runs to 359 residues: Guanine nucleotide-binding protein subunit alpha-11 (359 aa).

S-palmitoyl cysteine attachment occurs at residues cysteine 9 and cysteine 10. The G-alpha domain maps to 38–359 (RELKLLLLGT…QLNLKEYNLV (322 aa)). The tract at residues 41–54 (KLLLLGTGESGKST) is G1 motif. GTP-binding positions include 46 to 53 (GTGESGKS) and 180 to 183 (LRVR). Serine 53 lines the Mg(2+) pocket. A G2 motif region spans residues 178 to 186 (DVLRVRVPT). Residue threonine 186 coordinates Mg(2+). A G3 motif region spans residues 201–210 (FRMVDVGGQR). The interval 270–277 (ILFLNKKD) is G4 motif. Residues 274–277 (NKKD) and alanine 331 each bind GTP. Residues 329–334 (TCATDT) form a G5 motif region.

It belongs to the G-alpha family. G(q) subfamily. As to quaternary structure, g proteins are composed of 3 units; alpha, beta and gamma. The alpha chain contains the guanine nucleotide binding site. Interacts with RGS22. Interacts with NTSR1.

The protein localises to the cell membrane. The protein resides in the cytoplasm. It catalyses the reaction GTP + H2O = GDP + phosphate + H(+). Its function is as follows. Guanine nucleotide-binding proteins (G proteins) function as transducers downstream of G protein-coupled receptors (GPCRs) in numerous signaling cascades. The alpha chain contains the guanine nucleotide binding site and alternates between an active, GTP-bound state and an inactive, GDP-bound state. Signaling by an activated GPCR promotes GDP release and GTP binding. The alpha subunit has a low GTPase activity that converts bound GTP to GDP, thereby terminating the signal. Both GDP release and GTP hydrolysis are modulated by numerous regulatory proteins. Signaling is mediated via phospholipase C-beta-dependent inositol lipid hydrolysis for signal propagation: activates phospholipase C-beta: following GPCR activation, GNA11 activates PLC-beta (PLCB1, PLCB2, PLCB3 or PLCB4), leading to production of diacylglycerol (DAG) and inositol 1,4,5-trisphosphate (IP3). Transduces FFAR4 signaling in response to long-chain fatty acids (LCFAs). Together with GNAQ, required for heart development. In the respiratory epithelium, transmits OXGR1-dependent signals that lead to downstream intracellular Ca(2+) release and mucocilliary clearance of airborne pathogens. The sequence is that of Guanine nucleotide-binding protein subunit alpha-11 (GNA11) from Bos taurus (Bovine).